Consider the following 349-residue polypeptide: Isopentenyl-diphosphate delta-isomerase (349 aa).

6–7 lines the substrate pocket; the sequence is RK. Residues 62-64, Ser-93, and Asn-122 each bind FMN; that span reads AMT. Substrate is bound at residue Gln-152. Glu-153 contributes to the Mg(2+) binding site. FMN-binding positions include Lys-184, Thr-214, 258 to 259, and 280 to 281; these read GG and AG.

Belongs to the IPP isomerase type 2 family. Homooctamer. Dimer of tetramers. FMN serves as cofactor. It depends on NADPH as a cofactor. Mg(2+) is required as a cofactor.

It localises to the cytoplasm. The catalysed reaction is isopentenyl diphosphate = dimethylallyl diphosphate. Its function is as follows. Involved in the biosynthesis of isoprenoids. Catalyzes the 1,3-allylic rearrangement of the homoallylic substrate isopentenyl (IPP) to its allylic isomer, dimethylallyl diphosphate (DMAPP). This chain is Isopentenyl-diphosphate delta-isomerase, found in Bacillus licheniformis (strain ATCC 14580 / DSM 13 / JCM 2505 / CCUG 7422 / NBRC 12200 / NCIMB 9375 / NCTC 10341 / NRRL NRS-1264 / Gibson 46).